The primary structure comprises 71 residues: UPF0346 protein BCB4264_A2283 (71 aa).

The protein belongs to the UPF0346 family.

The protein is UPF0346 protein BCB4264_A2283 of Bacillus cereus (strain B4264).